Consider the following 1096-residue polypeptide: MCLTKDLNLLGSYETGFDMEKSIYNILTIDRWGSLNHMDYRQARLRLVHGKLALKFLKWVVKQPGLETDHIVQLVCITTHILVRARMYDPARHILKELSLMSGKSSFVFGALMTTYRLCNSNPSVYDILIRVYLREGMIQDSLEIFRLMGLYGFNPSVYTCNAILGSVVKSGEDVSVWSFLKEMLKRKICPDVATFNILINVLCAEGSFEKSSYLMQKMEKSGYAPTIVTYNTVLHWYCKKGRFKAAIELLDHMKSKGVDADVCTYNMLIHDLCRSNRIAKGYLLLRDMRKRMIHPNEVTYNTLINGFSNEGKVLIASQLLNEMLSFGLSPNHVTFNALIDGHISEGNFKEALKMFYMMEAKGLTPSEVSYGVLLDGLCKNAEFDLARGFYMRMKRNGVCVGRITYTGMIDGLCKNGFLDEAVVLLNEMSKDGIDPDIVTYSALINGFCKVGRFKTAKEIVCRIYRVGLSPNGIIYSTLIYNCCRMGCLKEAIRIYEAMILEGHTRDHFTFNVLVTSLCKAGKVAEAEEFMRCMTSDGILPNTVSFDCLINGYGNSGEGLKAFSVFDEMTKVGHHPTFFTYGSLLKGLCKGGHLREAEKFLKSLHAVPAAVDTVMYNTLLTAMCKSGNLAKAVSLFGEMVQRSILPDSYTYTSLISGLCRKGKTVIAILFAKEAEARGNVLPNKVMYTCFVDGMFKAGQWKAGIYFREQMDNLGHTPDIVTTNAMIDGYSRMGKIEKTNDLLPEMGNQNGGPNLTTYNILLHGYSKRKDVSTSFLLYRSIILNGILPDKLTCHSLVLGICESNMLEIGLKILKAFICRGVEVDRYTFNMLISKCCANGEINWAFDLVKVMTSLGISLDKDTCDAMVSVLNRNHRFQESRMVLHEMSKQGISPESRKYIGLINGLCRVGDIKTAFVVKEEMIAHKICPPNVAESAMVRALAKCGKADEATLLLRFMLKMKLVPTIASFTTLMHLCCKNGNVIEALELRVVMSNCGLKLDLVSYNVLITGLCAKGDMALAFELYEEMKGDGFLANATTYKALIRGLLARETAFSGADIILKDLLARGFITSMSLSQDSHRNLKMAMEKLKALQSNKKD.

27 PPR repeats span residues 122-156 (NPSV…GFNP), 157-191 (SVYT…KICP), 192-226 (DVAT…GYAP), 227-261 (TIVT…GVDA), 262-296 (DVCT…MIHP), 297-331 (NEVT…GLSP), 332-366 (NHVT…GLTP), 367-401 (SEVS…GVCV), 402-436 (GRIT…GIDP), 437-471 (DIVT…GLSP), 472-506 (NGII…GHTR), 507-541 (DHFT…GILP), 542-576 (NTVS…GHHP), 577-607 (TFFT…LHAV), 612-646 (DTVM…SILP), 647-681 (DSYT…GNVL), 683-717 (NKVM…GHTP), 718-752 (DIVT…NGGP), 753-787 (NLTT…GILP), 788-822 (DKLT…GVEV), 823-857 (DRYT…GISL), 858-892 (DKDT…GISP), 893-927 (ESRK…KICP), 928-962 (PNVA…KLVP), 963-997 (TIAS…GLKL), 998-1032 (DLVS…GFLA), and 1033-1068 (NATT…GFIT).

This sequence belongs to the PPR family. P subfamily.

In Arabidopsis thaliana (Mouse-ear cress), this protein is Pentatricopeptide repeat-containing protein At5g55840.